The sequence spans 256 residues: Phosphatidylglycerol--prolipoprotein diacylglyceryl transferase (256 aa).

3 consecutive transmembrane segments (helical) span residues 19 to 39, 56 to 76, and 91 to 111; these read VHWYGLMYLIGFVSAWLLGYW, LIFYSALGVILGGRVGYMLFY, and IWEGGMSFHGGLLGVVIAAWL. Arg139 serves as a coordination point for a 1,2-diacyl-sn-glycero-3-phospho-(1'-sn-glycerol). The chain crosses the membrane as a helical span at residues 231 to 251; the sequence is FGWLTMGQVLSIPMLLIGIWL.

It belongs to the Lgt family.

The protein localises to the cell inner membrane. The catalysed reaction is L-cysteinyl-[prolipoprotein] + a 1,2-diacyl-sn-glycero-3-phospho-(1'-sn-glycerol) = an S-1,2-diacyl-sn-glyceryl-L-cysteinyl-[prolipoprotein] + sn-glycerol 1-phosphate + H(+). Its pathway is protein modification; lipoprotein biosynthesis (diacylglyceryl transfer). Its function is as follows. Catalyzes the transfer of the diacylglyceryl group from phosphatidylglycerol to the sulfhydryl group of the N-terminal cysteine of a prolipoprotein, the first step in the formation of mature lipoproteins. The chain is Phosphatidylglycerol--prolipoprotein diacylglyceryl transferase from Legionella pneumophila (strain Lens).